A 188-amino-acid polypeptide reads, in one-letter code: Sulfopyruvate decarboxylase subunit beta (188 aa).

It belongs to the TPP enzyme family. Heterododecamer composed of 6 subunits alpha and 6 subunits beta. Requires thiamine diphosphate as cofactor.

The catalysed reaction is 3-sulfopyruvate + H(+) = sulfoacetaldehyde + CO2. Its pathway is cofactor biosynthesis; coenzyme M biosynthesis; sulfoacetaldehyde from phosphoenolpyruvate and sulfite: step 4/4. With respect to regulation, inhibited by oxygen when heated in air at 80 degrees Celsius. The enzyme is reactivated by addition of dithionite. Functionally, involved in the biosynthesis of the coenzyme M (2-mercaptoethanesulfonic acid). Catalyzes the decarboxylation of sulfopyruvate to sulfoacetaldehyde. This is Sulfopyruvate decarboxylase subunit beta from Methanocaldococcus jannaschii (strain ATCC 43067 / DSM 2661 / JAL-1 / JCM 10045 / NBRC 100440) (Methanococcus jannaschii).